A 249-amino-acid chain; its full sequence is Ubiquinone biosynthesis O-methyltransferase (249 aa).

S-adenosyl-L-methionine-binding residues include arginine 41, glycine 72, aspartate 93, and methionine 136.

Belongs to the methyltransferase superfamily. UbiG/COQ3 family.

The catalysed reaction is a 3-demethylubiquinol + S-adenosyl-L-methionine = a ubiquinol + S-adenosyl-L-homocysteine + H(+). It carries out the reaction a 3-(all-trans-polyprenyl)benzene-1,2-diol + S-adenosyl-L-methionine = a 2-methoxy-6-(all-trans-polyprenyl)phenol + S-adenosyl-L-homocysteine + H(+). Its pathway is cofactor biosynthesis; ubiquinone biosynthesis. In terms of biological role, O-methyltransferase that catalyzes the 2 O-methylation steps in the ubiquinone biosynthetic pathway. The sequence is that of Ubiquinone biosynthesis O-methyltransferase from Methylobacterium nodulans (strain LMG 21967 / CNCM I-2342 / ORS 2060).